Reading from the N-terminus, the 703-residue chain is Heat shock protein 75 kDa, mitochondrial (703 aa).

A mitochondrion-targeting transit peptide spans 1–56; it reads MARELRMLLLWGRRLRAPALAAACGGKPVLCPWRPPAQSWGPPRSLASSFHVGRPF. ATP contacts are provided by N118 and D157. Position 169 is a phosphoserine (S169). Residue N170 participates in ATP binding. T173 bears the Phosphothreonine mark. Positions 204 and 401 each coordinate ATP. An N6-acetyllysine mark is found at K423, K430, and K465. Phosphothreonine is present on T493.

The protein belongs to the heat shock protein 90 family. Binds to the intracellular domain of tumor necrosis factor type 1 receptor. Binds to RB1. Interacts with SRC. Interacts with SDHA.

It is found in the mitochondrion. The protein localises to the mitochondrion inner membrane. Its subcellular location is the mitochondrion matrix. Functionally, chaperone that expresses an ATPase activity. Involved in maintaining mitochondrial function and polarization, downstream of PINK1 and mitochondrial complex I. Is a negative regulator of mitochondrial respiration able to modulate the balance between oxidative phosphorylation and aerobic glycolysis. The impact of TRAP1 on mitochondrial respiration is probably mediated by modulation of mitochondrial SRC and inhibition of SDHA. The chain is Heat shock protein 75 kDa, mitochondrial (TRAP1) from Bos taurus (Bovine).